The primary structure comprises 144 residues: Transcription antitermination protein NusB (144 aa).

It belongs to the NusB family.

In terms of biological role, involved in transcription antitermination. Required for transcription of ribosomal RNA (rRNA) genes. Binds specifically to the boxA antiterminator sequence of the ribosomal RNA (rrn) operons. This chain is Transcription antitermination protein NusB, found in Streptococcus agalactiae serotype Ia (strain ATCC 27591 / A909 / CDC SS700).